Consider the following 190-residue polypeptide: Flavodoxin-like domain-containing protein BilS (190 aa).

It participates in porphyrin-containing compound metabolism; protoheme degradation. In terms of biological role, together with BilR, catalyzes reduction of mesobilirubin and/or bilirubin to urobilinogen, a key step during heme degradation. BilS is probably involved in electron transfer for the bilirubin reductase BilR. The polypeptide is Flavodoxin-like domain-containing protein BilS (Clostridium symbiosum (strain WAL-14163)).